Reading from the N-terminus, the 392-residue chain is Formate-dependent phosphoribosylglycinamide formyltransferase (392 aa).

Residues 15-16 (EL) and glutamate 75 each bind N(1)-(5-phospho-beta-D-ribosyl)glycinamide. ATP contacts are provided by residues arginine 107, lysine 148, 153–158 (SSGKGQ), 188–191 (EEFL), and glutamate 196. One can recognise an ATP-grasp domain in the interval 112–302 (DLAAGELNLR…EFELHLRAVL (191 aa)). 2 residues coordinate Mg(2+): glutamate 261 and glutamate 273. N(1)-(5-phospho-beta-D-ribosyl)glycinamide-binding positions include aspartate 280, lysine 350, and 357 to 358 (RR).

Belongs to the PurK/PurT family. As to quaternary structure, homodimer.

It catalyses the reaction N(1)-(5-phospho-beta-D-ribosyl)glycinamide + formate + ATP = N(2)-formyl-N(1)-(5-phospho-beta-D-ribosyl)glycinamide + ADP + phosphate + H(+). Its pathway is purine metabolism; IMP biosynthesis via de novo pathway; N(2)-formyl-N(1)-(5-phospho-D-ribosyl)glycinamide from N(1)-(5-phospho-D-ribosyl)glycinamide (formate route): step 1/1. Functionally, involved in the de novo purine biosynthesis. Catalyzes the transfer of formate to 5-phospho-ribosyl-glycinamide (GAR), producing 5-phospho-ribosyl-N-formylglycinamide (FGAR). Formate is provided by PurU via hydrolysis of 10-formyl-tetrahydrofolate. The protein is Formate-dependent phosphoribosylglycinamide formyltransferase of Synechococcus sp. (strain CC9605).